Reading from the N-terminus, the 320-residue chain is Aspartate carbamoyltransferase catalytic subunit (320 aa).

Positions 68 and 69 each coordinate carbamoyl phosphate. Residue Lys-96 participates in L-aspartate binding. 3 residues coordinate carbamoyl phosphate: Arg-118, His-148, and Gln-151. The L-aspartate site is built by Arg-181 and Arg-236. The carbamoyl phosphate site is built by Gly-277 and Pro-278.

It belongs to the aspartate/ornithine carbamoyltransferase superfamily. ATCase family. Heterododecamer (2C3:3R2) of six catalytic PyrB chains organized as two trimers (C3), and six regulatory PyrI chains organized as three dimers (R2).

The catalysed reaction is carbamoyl phosphate + L-aspartate = N-carbamoyl-L-aspartate + phosphate + H(+). It participates in pyrimidine metabolism; UMP biosynthesis via de novo pathway; (S)-dihydroorotate from bicarbonate: step 2/3. Its function is as follows. Catalyzes the condensation of carbamoyl phosphate and aspartate to form carbamoyl aspartate and inorganic phosphate, the committed step in the de novo pyrimidine nucleotide biosynthesis pathway. This chain is Aspartate carbamoyltransferase catalytic subunit, found in Polaromonas naphthalenivorans (strain CJ2).